We begin with the raw amino-acid sequence, 217 residues long: MATPTEKQILTLAQWFSPAYPVGAFAYSHGLEWSVEAGDVVDARTAQAWITDVLQHGAGWNDCLFIGSAYRAASLQELKNINDTALAFSASSERMMETRLQGEAFCGITASVWPVDLAGLCYPVAVGRAANLVGLPLTLSGQFYLHAFMANLVTAATRLVPLGQTEGQQIIRDLTPLCQAIADTALCANLSHLTSTAFLGDIAAMKHETQYSRMFRT.

It belongs to the UreF family. As to quaternary structure, ureD, UreF and UreG form a complex that acts as a GTP-hydrolysis-dependent molecular chaperone, activating the urease apoprotein by helping to assemble the nickel containing metallocenter of UreC. The UreE protein probably delivers the nickel.

It localises to the cytoplasm. Functionally, required for maturation of urease via the functional incorporation of the urease nickel metallocenter. This is Urease accessory protein UreF from Ruegeria pomeroyi (strain ATCC 700808 / DSM 15171 / DSS-3) (Silicibacter pomeroyi).